Here is a 394-residue protein sequence, read N- to C-terminus: Protein TsgA homolog (394 aa).

12 helical membrane-spanning segments follow: residues 11-31 (WISYFSYALTGALVIVTGMVM), 51-71 (FLNAGILISIFLNAWLMEIIP), 76-96 (LVFGFILMLIAIAGLMVGHNL), 101-121 (ISMFILGVVSGITMSIGTFLI), 134-154 (LLFTDSFFSMAGMIFPVAAAI), 162-182 (WYWVYACIGLLYVGIFVLTLC), 206-226 (MGVLFLAIAALCYILGQLGFI), 246-266 (QLVSNFWISYMIGMWVFSFIL), 274-294 (IVTVLAALATLSMYMFVSTNN), 302-322 (ILALGFVSSAIYTTLITLGSL), 334-354 (FILTCGTVGTMLTFVVTGPIV), and 363-383 (LATANGLYLTVFVMCLILGFF).

It belongs to the major facilitator superfamily. TsgA family.

The protein resides in the cell inner membrane. The sequence is that of Protein TsgA homolog from Yersinia enterocolitica serotype O:8 / biotype 1B (strain NCTC 13174 / 8081).